The chain runs to 461 residues: MLEFLSQQKPKILIIGDFMVDNYTWCDCSRISPEAPVLIAKTLKEDKRLGGAANVYANLKSLGADVFALGVVGDDESGKFLQENLKGEFLIQKGRKTPFKNRIMAHNQQVLRLDEEDISEILLENELIALFDEKIKDFKAVVLSDYAKGVLTPKVCKAVIEKAKVLNIPVLVDPKGSDFNKYSGATLLTPNKKEALEALKFENLEGENLEKGIKKLKEDFSLRYSIITLSEAGIALFDEGLKIAPAKALEVYDVTGAGDSVIAVLAFCLANEIEIFKACELANEAAAVVVSKIGSVSVSFDEIKSFKRVDFEKKIKSKEELLVLLKQNNKKIVFTNGCFDIVHFGHIKYLDKAKRLGDVLIVGLNSDASVKRLKGESRPVNSEFQRACMLAAFYFVDFVVIFDEDTPLELISFLKPDILVKGADYKDKLVVGADIVSRVELIDFEEGFSTSKIIEKIKDKK.

Positions 1-312 are ribokinase; sequence MLEFLSQQKP…IKSFKRVDFE (312 aa). 191 to 194 serves as a coordination point for ATP; the sequence is NKKE. Asp259 is a catalytic residue. A cytidylyltransferase region spans residues 334–461; the sequence is FTNGCFDIVH…KIIEKIKDKK (128 aa).

This sequence in the N-terminal section; belongs to the carbohydrate kinase PfkB family. It in the C-terminal section; belongs to the cytidylyltransferase family. In terms of assembly, homodimer.

The enzyme catalyses D-glycero-beta-D-manno-heptose 7-phosphate + ATP = D-glycero-beta-D-manno-heptose 1,7-bisphosphate + ADP + H(+). It carries out the reaction D-glycero-beta-D-manno-heptose 1-phosphate + ATP + H(+) = ADP-D-glycero-beta-D-manno-heptose + diphosphate. Its pathway is nucleotide-sugar biosynthesis; ADP-L-glycero-beta-D-manno-heptose biosynthesis; ADP-L-glycero-beta-D-manno-heptose from D-glycero-beta-D-manno-heptose 7-phosphate: step 1/4. The protein operates within nucleotide-sugar biosynthesis; ADP-L-glycero-beta-D-manno-heptose biosynthesis; ADP-L-glycero-beta-D-manno-heptose from D-glycero-beta-D-manno-heptose 7-phosphate: step 3/4. It functions in the pathway bacterial outer membrane biogenesis; LOS core biosynthesis. Functionally, catalyzes the phosphorylation of D-glycero-D-manno-heptose 7-phosphate at the C-1 position to selectively form D-glycero-beta-D-manno-heptose-1,7-bisphosphate. Catalyzes the ADP transfer from ATP to D-glycero-beta-D-manno-heptose 1-phosphate, yielding ADP-D-glycero-beta-D-manno-heptose. This chain is Bifunctional protein HldE (hldE), found in Campylobacter jejuni subsp. jejuni serotype O:2 (strain ATCC 700819 / NCTC 11168).